A 441-amino-acid polypeptide reads, in one-letter code: Zinc finger and BTB domain-containing protein 8A (441 aa).

The BTB domain maps to 24-92 (CDCSILVEGK…VYSGKLSLTG (69 aa)). Composition is skewed to polar residues over residues 143–170 (NGVE…SPEQ) and 178–196 (KSWN…TQQP). The tract at residues 143 to 251 (NGVERSSFYS…QSEEQAQIDA (109 aa)) is disordered. Phosphoserine is present on residues Ser161 and Ser167. Glycyl lysine isopeptide (Lys-Gly) (interchain with G-Cter in SUMO2) cross-links involve residues Lys178, Lys182, Lys191, and Lys199. Residues 198 to 208 (AKHEPRKESIK) are compositionally biased toward basic and acidic residues. Over residues 234 to 243 (SDSSSHVSQS) the composition is skewed to low complexity. 2 C2H2-type zinc fingers span residues 282 to 304 (FKCP…LRCH) and 310 to 333 (YPCQ…RTIH). Lys437 is covalently cross-linked (Glycyl lysine isopeptide (Lys-Gly) (interchain with G-Cter in SUMO2)).

The protein localises to the nucleus. Its function is as follows. May be involved in transcriptional regulation. The chain is Zinc finger and BTB domain-containing protein 8A (ZBTB8A) from Homo sapiens (Human).